Here is an 87-residue protein sequence, read N- to C-terminus: Small ribosomal subunit protein bS20 (87 aa).

Residues 1 to 20 are disordered; that stretch reads MANHKSAEKRARQTIKKTER.

It belongs to the bacterial ribosomal protein bS20 family.

Functionally, binds directly to 16S ribosomal RNA. This is Small ribosomal subunit protein bS20 from Campylobacter jejuni subsp. jejuni serotype O:2 (strain ATCC 700819 / NCTC 11168).